The primary structure comprises 156 residues: 6,7-dimethyl-8-ribityllumazine synthase (156 aa).

5-amino-6-(D-ribitylamino)uracil is bound by residues phenylalanine 22, 57–59 (AYE), and 81–83 (TVI). Residue 86 to 87 (GT) participates in (2S)-2-hydroxy-3-oxobutyl phosphate binding. Histidine 89 serves as the catalytic Proton donor. Phenylalanine 114 is a binding site for 5-amino-6-(D-ribitylamino)uracil. Residue arginine 128 participates in (2S)-2-hydroxy-3-oxobutyl phosphate binding.

It belongs to the DMRL synthase family. As to quaternary structure, forms an icosahedral capsid composed of 60 subunits, arranged as a dodecamer of pentamers.

The catalysed reaction is (2S)-2-hydroxy-3-oxobutyl phosphate + 5-amino-6-(D-ribitylamino)uracil = 6,7-dimethyl-8-(1-D-ribityl)lumazine + phosphate + 2 H2O + H(+). It functions in the pathway cofactor biosynthesis; riboflavin biosynthesis; riboflavin from 2-hydroxy-3-oxobutyl phosphate and 5-amino-6-(D-ribitylamino)uracil: step 1/2. Its function is as follows. Catalyzes the formation of 6,7-dimethyl-8-ribityllumazine by condensation of 5-amino-6-(D-ribitylamino)uracil with 3,4-dihydroxy-2-butanone 4-phosphate. This is the penultimate step in the biosynthesis of riboflavin. The sequence is that of 6,7-dimethyl-8-ribityllumazine synthase from Proteus mirabilis (strain HI4320).